A 241-amino-acid chain; its full sequence is Acetoacetyl-CoA reductase (241 aa).

Residues 12-14 (RGI), Arg-39, and 82-86 (NAGIT) each bind NADP(+). Substrate-binding positions include Asp-88 and 141–144 (QMGQ). Catalysis depends on Tyr-147, which acts as the Proton acceptor. Residue 177–180 (PGYI) coordinates NADP(+). Residue 178–179 (GY) participates in substrate binding.

Belongs to the short-chain dehydrogenases/reductases (SDR) family.

It is found in the cytoplasm. The catalysed reaction is a (3R)-3-hydroxyacyl-CoA + NADP(+) = a 3-oxoacyl-CoA + NADPH + H(+). The protein operates within biopolymer metabolism; poly-(R)-3-hydroxybutanoate biosynthesis. The chain is Acetoacetyl-CoA reductase from Rhizobium meliloti (strain 1021) (Ensifer meliloti).